Consider the following 209-residue polypeptide: Isopentenyl-diphosphate Delta-isomerase (209 aa).

Mn(2+)-binding residues include His-31 and His-38. The Nudix hydrolase domain occupies 36-171; the sequence is PLHLAFSVYI…RLLVSPWCRA (136 aa). Residue Cys-73 is part of the active site. Cys-73 is a binding site for Mg(2+). Residue His-75 coordinates Mn(2+). Glu-93 provides a ligand contact to Mg(2+). Residues Glu-120 and Glu-122 each contribute to the Mn(2+) site. Residue Glu-122 is part of the active site.

It belongs to the IPP isomerase type 1 family. Mg(2+) is required as a cofactor. The cofactor is Mn(2+).

The protein localises to the cytoplasm. The enzyme catalyses isopentenyl diphosphate = dimethylallyl diphosphate. The protein operates within isoprenoid biosynthesis; dimethylallyl diphosphate biosynthesis; dimethylallyl diphosphate from isopentenyl diphosphate: step 1/1. In terms of biological role, catalyzes the 1,3-allylic rearrangement of the homoallylic substrate isopentenyl (IPP) to its highly electrophilic allylic isomer, dimethylallyl diphosphate (DMAPP). The polypeptide is Isopentenyl-diphosphate Delta-isomerase (Rhizobium rhizogenes (Agrobacterium rhizogenes)).